The following is a 67-amino-acid chain: Probable Sec-independent protein translocase protein TatE (67 aa).

The chain crosses the membrane as a helical span at residues 4–21 (ISITKLLVIAALVVLLFG).

Belongs to the TatA/E family. TatE subfamily.

Its subcellular location is the cell inner membrane. Functionally, part of the twin-arginine translocation (Tat) system that transports large folded proteins containing a characteristic twin-arginine motif in their signal peptide across membranes. TatE shares overlapping functions with TatA. The protein is Probable Sec-independent protein translocase protein TatE of Citrobacter rodentium (strain ICC168) (Citrobacter freundii biotype 4280).